The following is a 566-amino-acid chain: Hexose transporter 2 (566 aa).

The tract at residues 1-39 (MSELETGTAAHGTPVENKSVSSSQASTPTNVGSRDDLKV) is disordered. The segment covering 16–32 (ENKSVSSSQASTPTNVG) has biased composition (polar residues). Residues 22–61 (SSQASTPTNVGSRDDLKVDDDNHSVDAIELPKKPRSAYIT) are Cytoplasmic-facing. The chain crosses the membrane as a helical span at residues 62–82 (VSILCLMVAFGGFVFGWDTGT). Residues 83–112 (ISGFVNQTDFIRRFGQEKADGSHYLSNVRT) lie on the Extracellular side of the membrane. N-linked (GlcNAc...) asparagine glycosylation is present at Asn88. Residues 113–133 (GLIVSIFNIGCAIGGIILSKL) traverse the membrane as a helical segment. Residues 134 to 140 (GDMYGRR) lie on the Cytoplasmic side of the membrane. A helical membrane pass occupies residues 141–161 (IGLMIVVLIYVVGIIIQIASI). Over 162 to 166 (DKWYQ) the chain is Extracellular. A helical transmembrane segment spans residues 167 to 187 (YFIGRIISGLGVGGISVLSPM). At 188–198 (LISETAPKHIR) the chain is on the cytoplasmic side. The chain crosses the membrane as a helical span at residues 199–219 (GTLVSFYQLMITFGIFLGYCT). The Extracellular portion of the chain corresponds to 220 to 233 (NYGTKTYSNSVQWR). A helical membrane pass occupies residues 234-254 (VPLGLCFAWAIFMITGMLFVP). At 255–333 (ESPRFLVEKD…MGMLIQSFQQ (79 aa)) the chain is on the cytoplasmic side. The helical transmembrane segment at 334 to 353 (LTGNNYFFYYGTTIFNSVGM) threads the bilayer. Residues 354 to 357 (DDSF) lie on the Extracellular side of the membrane. The chain crosses the membrane as a helical span at residues 358–378 (ETSIVLGIVNFASTFVAIYVV). At 379 to 385 (DKFGRRK) the chain is on the cytoplasmic side. Residues 386–406 (CLLWGAAAMTACMVVFASVGV) form a helical membrane-spanning segment. Residues 407-428 (TRLWPDGANHPETASKGAGNCM) lie on the Extracellular side of the membrane. The chain crosses the membrane as a helical span at residues 429 to 449 (IVFACFYIFCFATSWAPIAYV). Over 450 to 465 (VVAESYPLRVKAKCMA) the chain is Cytoplasmic. Residues 466–486 (IATASNWIWGFLNGFFTPFIT) form a helical membrane-spanning segment. Topologically, residues 487–492 (SAIHFY) are extracellular. Residues 493-513 (YGYVFMGCLVAMFFYVFFFVP) traverse the membrane as a helical segment. At 514–566 (ETKGLTLEEVQEMWEEGVLPWKSSSWVPSSRRNAGYDVDALQHDEKPWYKAML) the chain is on the cytoplasmic side.

Belongs to the major facilitator superfamily. Sugar transporter (TC 2.A.1.1) family.

The protein localises to the membrane. Its function is as follows. Probable glucose transporter. The protein is Hexose transporter 2 (KHT2) of Kluyveromyces lactis (Yeast).